Consider the following 332-residue polypeptide: 4-hydroxythreonine-4-phosphate dehydrogenase (332 aa).

Substrate is bound by residues His138 and Thr139. 3 residues coordinate a divalent metal cation: His168, His213, and His269. Residues Lys277, Asn286, and Arg295 each coordinate substrate.

This sequence belongs to the PdxA family. As to quaternary structure, homodimer. Zn(2+) is required as a cofactor. Requires Mg(2+) as cofactor. Co(2+) serves as cofactor.

Its subcellular location is the cytoplasm. The catalysed reaction is 4-(phosphooxy)-L-threonine + NAD(+) = 3-amino-2-oxopropyl phosphate + CO2 + NADH. It participates in cofactor biosynthesis; pyridoxine 5'-phosphate biosynthesis; pyridoxine 5'-phosphate from D-erythrose 4-phosphate: step 4/5. Functionally, catalyzes the NAD(P)-dependent oxidation of 4-(phosphooxy)-L-threonine (HTP) into 2-amino-3-oxo-4-(phosphooxy)butyric acid which spontaneously decarboxylates to form 3-amino-2-oxopropyl phosphate (AHAP). This Vibrio parahaemolyticus serotype O3:K6 (strain RIMD 2210633) protein is 4-hydroxythreonine-4-phosphate dehydrogenase.